We begin with the raw amino-acid sequence, 440 residues long: MSEFSQTVPELVAWARKNDFSISLPVDRLSFLLAVATLNGERLDGEMSEGELVDAFRHVSDAFEQTSETIGVRANNAINDMVRQRLLNRFTSEQAEGNAIYRLTPLGIGITDYYIRQREFSTLRLSMQLSIVAGELKRAADAAEEGGDEFHWHRNVYAPLKYSVAEIFDSIDLTQRLMDEQQQQVKDDIAQLLNKDWRAAISSCELLLSETSGTLRELQDTLEAAGDKLQANLLRIQDATMTHDDLHFVDRLVFDLQSKLDRIISWGQQSIDLWIGYDRHVHKFIRTAIDMDKNRVFAQRLRQSVQTYFDEPWALTYANADRLLDMRDEEMVLRDEEVTGELPEDLEYEEFNEIREQLAAIIEEQLAVYKTRQVPLDLGLVVREYLSQYPRARHFDVARIVIDQAVRLGVAQADFTGLPAKWQPINDYGAKVQAHVIDKY.

A leucine-zipper region spans residues 208–236 (LSETSGTLRELQDTLEAAGDKLQANLLRI).

Belongs to the MukF family. In terms of assembly, interacts, and probably forms a ternary complex, with MukE and MukB via its C-terminal region. The complex formation is stimulated by calcium or magnesium. It is required for an interaction between MukE and MukB.

Its subcellular location is the cytoplasm. It is found in the nucleoid. Its function is as follows. Involved in chromosome condensation, segregation and cell cycle progression. May participate in facilitating chromosome segregation by condensation DNA from both sides of a centrally located replisome during cell division. Not required for mini-F plasmid partitioning. Probably acts via its interaction with MukB and MukE. Overexpression results in anucleate cells. It has a calcium binding activity. This is Chromosome partition protein MukF from Escherichia coli (strain UTI89 / UPEC).